The primary structure comprises 72 residues: Cytochrome b-c1 complex subunit 8-1, mitochondrial (72 aa).

Over 1–41 the chain is Mitochondrial matrix; the sequence is MGKQPVKLKAVVYALSPFQQKIMTGLWKDLPEKIHHKVSEN. Residues 42–58 form a helical membrane-spanning segment; it reads WISATLLVTPVVGTYWY. The Mitochondrial intermembrane segment spans residues 59–72; sequence AQYFKEQEKLEHRF.

Belongs to the UQCRQ/QCR8 family. As to quaternary structure, component of the ubiquinol-cytochrome c oxidoreductase (cytochrome b-c1 complex, complex III, CIII), a multisubunit enzyme composed of 10 subunits. The complex is composed of 3 respiratory subunits cytochrome b (MT-CYB), cytochrome c1 (CYC1-1 or CYC1-2) and Rieske protein (UCR1-1 or UCR1-2), 2 core protein subunits MPPalpha1 (or MPPalpha2) and MPPB, and 5 low-molecular weight protein subunits QCR7-1 (or QCR7-2), UCRQ-1 (or UCRQ-2), QCR9, UCRY and probably QCR6-1 (or QCR6-2). The complex exists as an obligatory dimer and forms supercomplexes (SCs) in the inner mitochondrial membrane with NADH-ubiquinone oxidoreductase (complex I, CI), resulting in different assemblies (supercomplexes SCI(1)III(2) and SCI(2)III(4)).

The protein resides in the mitochondrion inner membrane. Its function is as follows. Component of the ubiquinol-cytochrome c oxidoreductase, a multisubunit transmembrane complex that is part of the mitochondrial electron transport chain which drives oxidative phosphorylation. The respiratory chain contains 3 multisubunit complexes succinate dehydrogenase (complex II, CII), ubiquinol-cytochrome c oxidoreductase (cytochrome b-c1 complex, complex III, CIII) and cytochrome c oxidase (complex IV, CIV), that cooperate to transfer electrons derived from NADH and succinate to molecular oxygen, creating an electrochemical gradient over the inner membrane that drives transmembrane transport and the ATP synthase. The cytochrome b-c1 complex catalyzes electron transfer from ubiquinol to cytochrome c, linking this redox reaction to translocation of protons across the mitochondrial inner membrane, with protons being carried across the membrane as hydrogens on the quinol. In the process called Q cycle, 2 protons are consumed from the matrix, 4 protons are released into the intermembrane space and 2 electrons are passed to cytochrome c. This is Cytochrome b-c1 complex subunit 8-1, mitochondrial (UCRQ-1) from Arabidopsis thaliana (Mouse-ear cress).